The chain runs to 85 residues: UPF0386 protein RL2079 (85 aa).

The protein belongs to the UPF0386 family.

The sequence is that of UPF0386 protein RL2079 from Rhizobium johnstonii (strain DSM 114642 / LMG 32736 / 3841) (Rhizobium leguminosarum bv. viciae).